The following is a 208-amino-acid chain: Uracil phosphoribosyltransferase (208 aa).

Residues arginine 78, arginine 103, and 130–138 (DPMFATGGT) contribute to the 5-phospho-alpha-D-ribose 1-diphosphate site. Uracil contacts are provided by residues isoleucine 193 and 198 to 200 (GDA). Residue aspartate 199 coordinates 5-phospho-alpha-D-ribose 1-diphosphate.

Belongs to the UPRTase family. Mg(2+) is required as a cofactor.

The catalysed reaction is UMP + diphosphate = 5-phospho-alpha-D-ribose 1-diphosphate + uracil. It participates in pyrimidine metabolism; UMP biosynthesis via salvage pathway; UMP from uracil: step 1/1. Its activity is regulated as follows. Allosterically activated by GTP. Functionally, catalyzes the conversion of uracil and 5-phospho-alpha-D-ribose 1-diphosphate (PRPP) to UMP and diphosphate. The protein is Uracil phosphoribosyltransferase of Campylobacter concisus (strain 13826).